Consider the following 36-residue polypeptide: AHQDLSGKVFVIPMATSTSHVKLHARVSEPISAMTM.

Residues 6 to 36 (SGKVFVIPMATSTSHVKLHARVSEPISAMTM) enclose the Pentraxin (PTX) domain.

This sequence belongs to the pentraxin family. As to quaternary structure, homopentamer. Discoid arrangement of 5 covalently bound subunits. It depends on Ca(2+) as a cofactor.

It is found in the secreted. The chain is Serum amyloid P-component from Salmo salar (Atlantic salmon).